The primary structure comprises 123 residues: Large ribosomal subunit protein bL12 (123 aa).

This sequence belongs to the bacterial ribosomal protein bL12 family. As to quaternary structure, homodimer. Part of the ribosomal stalk of the 50S ribosomal subunit. Forms a multimeric L10(L12)X complex, where L10 forms an elongated spine to which 2 to 4 L12 dimers bind in a sequential fashion. Binds GTP-bound translation factors.

Its function is as follows. Forms part of the ribosomal stalk which helps the ribosome interact with GTP-bound translation factors. Is thus essential for accurate translation. The polypeptide is Large ribosomal subunit protein bL12 (Desulfotalea psychrophila (strain LSv54 / DSM 12343)).